Consider the following 287-residue polypeptide: Flagellin (287 aa).

The protein belongs to the bacterial flagellin family.

Its subcellular location is the secreted. The protein resides in the bacterial flagellum. Its function is as follows. Flagellin is the subunit protein which polymerizes to form the filaments of bacterial flagella. This is Flagellin (flaA) from Listeria innocua serovar 6a (strain ATCC BAA-680 / CLIP 11262).